Consider the following 576-residue polypeptide: Arginine--tRNA ligase (576 aa).

Residues 126–136 carry the 'HIGH' region motif; sequence ANPTGPMHIGH.

The protein belongs to the class-I aminoacyl-tRNA synthetase family. As to quaternary structure, monomer.

The protein localises to the cytoplasm. The catalysed reaction is tRNA(Arg) + L-arginine + ATP = L-arginyl-tRNA(Arg) + AMP + diphosphate. This chain is Arginine--tRNA ligase, found in Rickettsia typhi (strain ATCC VR-144 / Wilmington).